We begin with the raw amino-acid sequence, 335 residues long: tRNA-dihydrouridine(20/20a) synthase (335 aa).

Residues 20-22 (PML) and Q72 contribute to the FMN site. Residue C102 is the Proton donor of the active site. FMN-binding positions include K141, H173, 213 to 215 (NGG), and 235 to 236 (GR).

Belongs to the Dus family. DusA subfamily. Requires FMN as cofactor.

The catalysed reaction is 5,6-dihydrouridine(20) in tRNA + NADP(+) = uridine(20) in tRNA + NADPH + H(+). The enzyme catalyses 5,6-dihydrouridine(20) in tRNA + NAD(+) = uridine(20) in tRNA + NADH + H(+). It carries out the reaction 5,6-dihydrouridine(20a) in tRNA + NADP(+) = uridine(20a) in tRNA + NADPH + H(+). It catalyses the reaction 5,6-dihydrouridine(20a) in tRNA + NAD(+) = uridine(20a) in tRNA + NADH + H(+). In terms of biological role, catalyzes the synthesis of 5,6-dihydrouridine (D), a modified base found in the D-loop of most tRNAs, via the reduction of the C5-C6 double bond in target uridines. Specifically modifies U20 and U20a in tRNAs. The protein is tRNA-dihydrouridine(20/20a) synthase of Shewanella oneidensis (strain ATCC 700550 / JCM 31522 / CIP 106686 / LMG 19005 / NCIMB 14063 / MR-1).